A 55-amino-acid chain; its full sequence is Large ribosomal subunit protein bL33 (55 aa).

This sequence belongs to the bacterial ribosomal protein bL33 family.

In Campylobacter fetus subsp. fetus (strain 82-40), this protein is Large ribosomal subunit protein bL33.